The chain runs to 263 residues: uncharacterized protein (263 aa).

It belongs to the flavoredoxin family. Requires FMN as cofactor.

This is an uncharacterized protein from Aeropyrum pernix (strain ATCC 700893 / DSM 11879 / JCM 9820 / NBRC 100138 / K1).